We begin with the raw amino-acid sequence, 221 residues long: Large ribosomal subunit protein uL4 (221 aa).

The tract at residues Ala-46–Arg-74 is disordered.

The protein belongs to the universal ribosomal protein uL4 family. In terms of assembly, part of the 50S ribosomal subunit.

One of the primary rRNA binding proteins, this protein initially binds near the 5'-end of the 23S rRNA. It is important during the early stages of 50S assembly. It makes multiple contacts with different domains of the 23S rRNA in the assembled 50S subunit and ribosome. In terms of biological role, forms part of the polypeptide exit tunnel. The protein is Large ribosomal subunit protein uL4 of Petrotoga mobilis (strain DSM 10674 / SJ95).